We begin with the raw amino-acid sequence, 341 residues long: Phosphoribosylformylglycinamidine cyclo-ligase (341 aa).

Belongs to the AIR synthase family.

The protein localises to the cytoplasm. It carries out the reaction 2-formamido-N(1)-(5-O-phospho-beta-D-ribosyl)acetamidine + ATP = 5-amino-1-(5-phospho-beta-D-ribosyl)imidazole + ADP + phosphate + H(+). Its pathway is purine metabolism; IMP biosynthesis via de novo pathway; 5-amino-1-(5-phospho-D-ribosyl)imidazole from N(2)-formyl-N(1)-(5-phospho-D-ribosyl)glycinamide: step 2/2. This chain is Phosphoribosylformylglycinamidine cyclo-ligase, found in Alkaliphilus oremlandii (strain OhILAs) (Clostridium oremlandii (strain OhILAs)).